A 408-amino-acid chain; its full sequence is Prenyltransferase criF (408 aa).

Dimethylallyl diphosphate is bound by residues Arg94, Lys181, Tyr183, Arg248, Lys250, Tyr252, Gln334, Tyr336, Tyr400, and Tyr404.

It belongs to the tryptophan dimethylallyltransferase family. As to quaternary structure, homodimer.

The enzyme catalyses preechinulin + dimethylallyl diphosphate = tardioxopiperazine B + diphosphate. The catalysed reaction is preechinulin + dimethylallyl diphosphate = tardioxopiperazine A + diphosphate. It carries out the reaction tardioxopiperazine A + dimethylallyl diphosphate = echinulin + diphosphate. It catalyses the reaction tardioxopiperazine A + dimethylallyl diphosphate = variecolorin L + diphosphate. The enzyme catalyses neoechinulin A + dimethylallyl diphosphate = variecolorin G + diphosphate. The catalysed reaction is neoechinulin A + dimethylallyl diphosphate = isoechinulin A + diphosphate. It carries out the reaction isoechinulin A + dimethylallyl diphosphate = dehydroechinulin + diphosphate. It catalyses the reaction neoechinulin B + dimethylallyl diphosphate = isoechinulin B + diphosphate. Its pathway is secondary metabolite biosynthesis. The protein operates within alkaloid biosynthesis. In terms of biological role, prenyltransferase; part of the gene cluster that mediates the biosynthesis of echinulin family alkaloid. The pathway begins with the biosynthesis of the cyclic dipeptide cyclo-L-Trp-L-Ala (cyclo-TA) by the NRPS criC via condensation of L-alanine and L-tryptophan. The prenyltransferase criA then catalyzes the first prenylation step, a reverse prenylation reaction at C2, to yield preechinulin. Preechinulin is the substrate of the cytochrome P450 monooxygenase criE that catalyzes the formation of the double bond between C10 and C11 to produce neoechulin A. The unique prenyltransferase criF functions as a competitive enzyme with criE for preechinulin metabolization and uses preechinulin for effective regiospecific prenylations. Preechinulin is prenylated by criF at C5 or C7. C7-prenylation leads to accumulation of tardioxopiperazine B without further modification by criF. In contrast, the C5-prenylated tardioxopiperazine A can be prenylated again by criF, predominantly at C7 to form echinulin or less frequently at C4 to give variecolorin L. CriF also accepts neoechilunin A to produce varlecolorin G (prenylation at C5) or isoechinulin A (prenylation at C7). CriF further converts isoechinulin A into dehydroechinulin. Moreover, a yet unidentified enzyme can also convert neoechilunin A into neoechilunin B by introducing a double bond between positions C14 and C17 and thus provides a further substrate to criF for C5 and C7 prenylation. This chain is Prenyltransferase criF, found in Aspergillus cristatus (Chinese Fuzhuan brick tea-fermentation fungus).